Reading from the N-terminus, the 316-residue chain is Ribosomal RNA small subunit methyltransferase H (316 aa).

S-adenosyl-L-methionine is bound by residues 35 to 37 (AGH), aspartate 55, phenylalanine 84, aspartate 105, and glutamine 112.

Belongs to the methyltransferase superfamily. RsmH family.

It localises to the cytoplasm. The catalysed reaction is cytidine(1402) in 16S rRNA + S-adenosyl-L-methionine = N(4)-methylcytidine(1402) in 16S rRNA + S-adenosyl-L-homocysteine + H(+). Specifically methylates the N4 position of cytidine in position 1402 (C1402) of 16S rRNA. The sequence is that of Ribosomal RNA small subunit methyltransferase H from Streptococcus sanguinis (strain SK36).